A 293-amino-acid chain; its full sequence is uncharacterized protein (293 aa).

The 58-residue stretch at 1-58 folds into the HTH lysR-type domain; that stretch reads MDLRRFITLKTVVEEGSFLRASQKLCCTQSTVTFHIQQLEQEFSVQLFEKIGRRMCLT. Positions 18–37 form a DNA-binding region, H-T-H motif; it reads FLRASQKLCCTQSTVTFHIQ.

Belongs to the LysR transcriptional regulatory family.

This is an uncharacterized protein from Escherichia coli (strain K12).